Here is an 890-residue protein sequence, read N- to C-terminus: uncharacterized protein (890 aa).

Residues Met1–Ala20 form the signal peptide. A run of 6 helical transmembrane segments spans residues Ala518–Leu538, Thr567–Ala587, Leu613–Ile633, Val651–Met671, Ile684–Ile704, and Phe775–Leu795. The tract at residues Lys860–Glu890 is disordered. The span at Arg862–Glu890 shows a compositional bias: basic and acidic residues.

The protein belongs to the TrbL/VirB6 family.

Its subcellular location is the cell membrane. This is an uncharacterized protein from Rickettsia felis (strain ATCC VR-1525 / URRWXCal2) (Rickettsia azadi).